A 209-amino-acid polypeptide reads, in one-letter code: Kynurenine formamidase (209 aa).

Substrate is bound at residue phenylalanine 18. Residues histidine 48, histidine 52, and aspartate 54 each contribute to the Zn(2+) site. Histidine 58 serves as the catalytic Proton donor/acceptor. Zn(2+)-binding residues include histidine 160 and glutamate 172.

It belongs to the Cyclase 1 superfamily. KynB family. Homodimer. The cofactor is Zn(2+).

The enzyme catalyses N-formyl-L-kynurenine + H2O = L-kynurenine + formate + H(+). It functions in the pathway amino-acid degradation; L-tryptophan degradation via kynurenine pathway; L-kynurenine from L-tryptophan: step 2/2. In terms of biological role, catalyzes the hydrolysis of N-formyl-L-kynurenine to L-kynurenine, the second step in the kynurenine pathway of tryptophan degradation. The sequence is that of Kynurenine formamidase from Bordetella avium (strain 197N).